The sequence spans 516 residues: Facilitated glucose transporter homolog (516 aa).

The segment at 1-37 (MNAVVASQNKNDRSFSNMESESSSNVEKSEKENHHQS) is disordered. The Cytoplasmic segment spans residues 1–47 (MNAVVASQNKNDRSFSNMESESSSNVEKSEKENHHQSLPDENWTPFL). Residues 14–26 (SFSNMESESSSNV) are compositionally biased toward low complexity. The segment covering 27–37 (EKSEKENHHQS) has biased composition (basic and acidic residues). A helical transmembrane segment spans residues 48–68 (FFCISSIALASFQDGFQIGCI). The Extracellular portion of the chain corresponds to 69–101 (NAPGPLIIDWIKKCHFELFGEVLSQYQADFIWS). The helical transmembrane segment at 102-122 (VAVSMFSVGGMFGSFCSGFLA) threads the bilayer. Over 123–138 (DKFGRKSTLLYNNILA) the chain is Cytoplasmic. Residues 139–159 (LLAAVCLSTSKLFNFYPMIVF) traverse the membrane as a helical segment. Residues 160–161 (GR) are Extracellular-facing. The chain crosses the membrane as a helical span at residues 162–182 (FLVGLNCGITSGLVPMFLTEL). Over 183 to 200 (APANLRGKCGSFHQLNIS) the chain is Cytoplasmic. The helical transmembrane segment at 201 to 221 (VAIVLSQALGLPQIFGTQVGW) threads the bilayer. Pro222 is a topological domain (extracellular). A helical transmembrane segment spans residues 223–243 (YIFACVAIPTFLQLATIPFCV). Residues 244–306 (ESPKYLISKL…SLFKGDNQWP (63 aa)) are Cytoplasmic-facing. Residues 307-327 (MIVSILMMFSQQFSGISAVTF) form a helical membrane-spanning segment. Over 328 to 344 (YSTLIFKRNGLSGNEPM) the chain is Extracellular. Residues 345–365 (YATVGFGCIKLIATFGCLFLI) traverse the membrane as a helical segment. Residues 366–376 (DHPKFGRKRLH) lie on the Cytoplasmic side of the membrane. The helical transmembrane segment at 377 to 397 (IAGLSGMCISSILIVITLTLS) threads the bilayer. The Extracellular portion of the chain corresponds to 398–409 (NAGYHWASYMNV). The chain crosses the membrane as a helical span at residues 410 to 430 (LFILSFVVTFAFGPGPIPWFF). At 431–444 (TSELFDSATRGRAA) the chain is on the cytoplasmic side. A helical transmembrane segment spans residues 445–465 (AVSATSNWVANWMVGLTFLPI). Over 466–471 (NNIIHQ) the chain is Extracellular. A helical membrane pass occupies residues 472 to 492 (YAFLMFTFFTFTFAIFTWKFV). At 493 to 516 (PETKGKSPSAIRKELAFMRKRICS) the chain is on the cytoplasmic side.

The protein belongs to the major facilitator superfamily. Sugar transporter (TC 2.A.1.1) family. Expressed in seam cells from the early embryonic stage through the L2 stage (at protein level).

It is found in the cell membrane. In terms of biological role, appears to have no transport activity for glucose. This Caenorhabditis elegans protein is Facilitated glucose transporter homolog.